Reading from the N-terminus, the 370-residue chain is Chorismate synthase (370 aa).

Positions 41-60 (IQGDLDRRKPGTSRHVTQRK) are disordered. NADP(+) is bound by residues R48 and R54. Residues 125-127 (RSS), 238-239 (NA), G278, 293-297 (KPTSS), and R319 contribute to the FMN site.

This sequence belongs to the chorismate synthase family. Homotetramer. It depends on FMNH2 as a cofactor.

It carries out the reaction 5-O-(1-carboxyvinyl)-3-phosphoshikimate = chorismate + phosphate. The protein operates within metabolic intermediate biosynthesis; chorismate biosynthesis; chorismate from D-erythrose 4-phosphate and phosphoenolpyruvate: step 7/7. Catalyzes the anti-1,4-elimination of the C-3 phosphate and the C-6 proR hydrogen from 5-enolpyruvylshikimate-3-phosphate (EPSP) to yield chorismate, which is the branch point compound that serves as the starting substrate for the three terminal pathways of aromatic amino acid biosynthesis. This reaction introduces a second double bond into the aromatic ring system. The polypeptide is Chorismate synthase (Cupriavidus pinatubonensis (strain JMP 134 / LMG 1197) (Cupriavidus necator (strain JMP 134))).